The sequence spans 462 residues: Hydroxymethylglutaryl-CoA synthase (462 aa).

E86 (proton donor/acceptor) is an active-site residue. The active-site Acyl-thioester intermediate is the C120. (3S)-3-hydroxy-3-methylglutaryl-CoA is bound by residues C120, T211, H261, K270, N338, and S372. H261 acts as the Proton donor/acceptor in catalysis.

The protein belongs to the thiolase-like superfamily. HMG-CoA synthase family.

The catalysed reaction is acetoacetyl-CoA + acetyl-CoA + H2O = (3S)-3-hydroxy-3-methylglutaryl-CoA + CoA + H(+). Its pathway is siderophore biosynthesis. Hydroxymethylglutaryl-CoA synthase involved in the biosynthesis of siderophore ferrichrome A which is contributing to organismal virulence. The first step of ferrichrome A biosynthesis is performed by the HMG-CoA synthase hcs1 which catalyzes the generation of HMG-CoA and CoA using acetoacetyl-CoA and acetyl-CoA as substrates. The enoyl-CoA isomerase/hydratase fer4 then catalyzes the conversion of hcs1-produced HMG-CoA to methylglutaconyl-CoA. The acyltransferase fer5 then fuses the fer4-generated methylglutaconyl-CoA with sid1-generated hydroxyornithine to yield methylglutaconyl hydroxyornithine. Methylglutaconyl hydroxyornithine is then available for use by the NRPS fer3 to generate ferrichrome A. This is Hydroxymethylglutaryl-CoA synthase from Mycosarcoma maydis (Corn smut fungus).